Here is a 96-residue protein sequence, read N- to C-terminus: Aspartyl/glutamyl-tRNA(Asn/Gln) amidotransferase subunit C (96 aa).

Belongs to the GatC family. As to quaternary structure, heterotrimer of A, B and C subunits.

It carries out the reaction L-glutamyl-tRNA(Gln) + L-glutamine + ATP + H2O = L-glutaminyl-tRNA(Gln) + L-glutamate + ADP + phosphate + H(+). It catalyses the reaction L-aspartyl-tRNA(Asn) + L-glutamine + ATP + H2O = L-asparaginyl-tRNA(Asn) + L-glutamate + ADP + phosphate + 2 H(+). Its function is as follows. Allows the formation of correctly charged Asn-tRNA(Asn) or Gln-tRNA(Gln) through the transamidation of misacylated Asp-tRNA(Asn) or Glu-tRNA(Gln) in organisms which lack either or both of asparaginyl-tRNA or glutaminyl-tRNA synthetases. The reaction takes place in the presence of glutamine and ATP through an activated phospho-Asp-tRNA(Asn) or phospho-Glu-tRNA(Gln). The protein is Aspartyl/glutamyl-tRNA(Asn/Gln) amidotransferase subunit C of Leptospira borgpetersenii serovar Hardjo-bovis (strain JB197).